A 358-amino-acid polypeptide reads, in one-letter code: Alanine racemase, biosynthetic (358 aa).

The active-site Proton acceptor; specific for D-alanine is Lys34. An N6-(pyridoxal phosphate)lysine modification is found at Lys34. Arg130 contacts substrate. Tyr254 functions as the Proton acceptor; specific for L-alanine in the catalytic mechanism. Met302 serves as a coordination point for substrate.

This sequence belongs to the alanine racemase family. It depends on pyridoxal 5'-phosphate as a cofactor.

It catalyses the reaction L-alanine = D-alanine. The protein operates within amino-acid biosynthesis; D-alanine biosynthesis; D-alanine from L-alanine: step 1/1. It participates in cell wall biogenesis; peptidoglycan biosynthesis. Its function is as follows. Catalyzes the interconversion of L-alanine and D-alanine. Provides the D-alanine required for cell wall biosynthesis. The sequence is that of Alanine racemase, biosynthetic (alr) from Pseudomonas aeruginosa (strain ATCC 15692 / DSM 22644 / CIP 104116 / JCM 14847 / LMG 12228 / 1C / PRS 101 / PAO1).